An 81-amino-acid chain; its full sequence is Cytotoxin 2b (81 aa).

A signal peptide spans 1 to 21; it reads MKTLLLTLVVVTTVCLDLGYT. 4 disulfides stabilise this stretch: Cys24–Cys42, Cys35–Cys59, Cys63–Cys74, and Cys75–Cys80.

Belongs to the three-finger toxin family. Short-chain subfamily. Type IA cytotoxin sub-subfamily. Monomer in solution; Homodimer and oligomer in the presence of negatively charged lipids forming a pore with a size ranging between 20 and 30 Angstroms. In terms of tissue distribution, expressed by the venom gland.

It localises to the secreted. Its subcellular location is the target cell membrane. In terms of biological role, shows cytolytic activity on many different cells by forming pore in lipid membranes. In vivo, increases heart rate or kills the animal by cardiac arrest. In addition, it binds to heparin with high affinity, interacts with Kv channel-interacting protein 1 (KCNIP1) in a calcium-independent manner, and binds to integrin alpha-V/beta-3 (ITGAV/ITGB3) with moderate affinity. This chain is Cytotoxin 2b, found in Naja sputatrix (Malayan spitting cobra).